The sequence spans 466 residues: MAAAFSSTVGAPASTPTNFLGKKLKKQVTSAVNYHGKSSNINRFKVMAKELDEGKQTDQDRWKGLAYDISDDQQDITRGKGFVDSLFQAPTGDGTHEAVLSSYEYLSQGLRTYDFDNTMGGFYIAPAFMDKLVVHISKNFMTLPNIKVPLILGIWGGKGQGKSFQCELVFAKMGINPIMMSAGELESGNAGEPAKLIRQRYREAADIIKKGKMCCLFINDLDAGAGRMGGTTQYTVNNQMVNATLMNIADNPTNVQLPGMYNKEDNPRVPIIVTGNDFSTLYAPLIRDGRMEKFYWAPTRDDRVGVCKGIFRTDNVPDEDIVKIVDSFPGQSIDFFGALRARVYDDEVRKWVSDTGVENIGKRLVNSREGPPEFEQPKMTIEKLMEYGYMLVKEQENVKRVQLAEQYLSEAALGDANSDAMKTGSFYGQGAQQAGNLPVPEGCTDPVAKNFDPTARSDDGSCLYTF.

The transit peptide at 1 to 48 directs the protein to the chloroplast; that stretch reads MAAAFSSTVGAPASTPTNFLGKKLKKQVTSAVNYHGKSSNINRFKVMA. An ATP-binding site is contributed by 156–163; the sequence is GGKGQGKS. The tract at residues 429–454 is disordered; sequence QGAQQAGNLPVPEGCTDPVAKNFDPT.

Belongs to the RuBisCO activase family.

The protein localises to the plastid. It localises to the chloroplast stroma. Functionally, activation of RuBisCO (ribulose-1,5-bisphosphate carboxylase/oxygenase; EC 4.1.1.39) involves the ATP-dependent carboxylation of the epsilon-amino group of lysine leading to a carbamate structure. This is Ribulose bisphosphate carboxylase/oxygenase activase, chloroplastic (RCA) from Oryza sativa subsp. japonica (Rice).